We begin with the raw amino-acid sequence, 518 residues long: Light-independent protochlorophyllide reductase subunit B (518 aa).

Residue Asp36 participates in [4Fe-4S] cluster binding. The Proton donor role is filled by Asp299. 434 to 435 (GM) contributes to the substrate binding site.

This sequence belongs to the ChlB/BchB/BchZ family. In terms of assembly, protochlorophyllide reductase is composed of three subunits; ChlL, ChlN and ChlB. Forms a heterotetramer of two ChlB and two ChlN subunits. [4Fe-4S] cluster is required as a cofactor.

It is found in the plastid. The protein localises to the chloroplast. It carries out the reaction chlorophyllide a + oxidized 2[4Fe-4S]-[ferredoxin] + 2 ADP + 2 phosphate = protochlorophyllide a + reduced 2[4Fe-4S]-[ferredoxin] + 2 ATP + 2 H2O. The protein operates within porphyrin-containing compound metabolism; chlorophyll biosynthesis (light-independent). Component of the dark-operative protochlorophyllide reductase (DPOR) that uses Mg-ATP and reduced ferredoxin to reduce ring D of protochlorophyllide (Pchlide) to form chlorophyllide a (Chlide). This reaction is light-independent. The NB-protein (ChlN-ChlB) is the catalytic component of the complex. The protein is Light-independent protochlorophyllide reductase subunit B of Adiantum capillus-veneris (Maidenhair fern).